A 688-amino-acid chain; its full sequence is DNA-directed RNA polymerase subunit beta' (688 aa).

Zn(2+) is bound by residues Cys69, Cys71, Cys87, and Cys90. Mg(2+) contacts are provided by Asp489, Asp491, and Asp493.

Belongs to the RNA polymerase beta' chain family. RpoC1 subfamily. In plastids the minimal PEP RNA polymerase catalytic core is composed of four subunits: alpha, beta, beta', and beta''. When a (nuclear-encoded) sigma factor is associated with the core the holoenzyme is formed, which can initiate transcription. Requires Mg(2+) as cofactor. The cofactor is Zn(2+).

The protein localises to the plastid. The protein resides in the chloroplast. It carries out the reaction RNA(n) + a ribonucleoside 5'-triphosphate = RNA(n+1) + diphosphate. Its function is as follows. DNA-dependent RNA polymerase catalyzes the transcription of DNA into RNA using the four ribonucleoside triphosphates as substrates. The polypeptide is DNA-directed RNA polymerase subunit beta' (Piper cenocladum (Ant piper)).